We begin with the raw amino-acid sequence, 251 residues long: Fibroblast growth factor-binding protein 1 (251 aa).

The N-terminal stretch at 1–20 (MRLHSLILLSFLLLATQAFS) is a signal peptide. Positions 25-62 (KRAKNAPHSTAEEGVEGSAPSLGKAQNKQRSRTSKSLT) are disordered. 3 disulfides stabilise this stretch: cysteine 74-cysteine 91, cysteine 100-cysteine 133, and cysteine 109-cysteine 145. A disordered region spans residues 160 to 189 (NARGNTKPRKEKAEVSAREHNKVQEAVSTE). The span at 170–182 (EKAEVSAREHNKV) shows a compositional bias: basic and acidic residues. O-linked (GalNAc...) serine glycosylation occurs at serine 175. The sufficient for interaction with FGF2 and FGF2-induced effects stretch occupies residues 210 to 251 (RDPECLEDPDVLNQRKTALEFCGESWSSICTFFLNMLQATSC). 2 disulfide bridges follow: cysteine 214–cysteine 251 and cysteine 231–cysteine 239.

The protein belongs to the fibroblast growth factor-binding protein family. In terms of assembly, found in a complex with FGFBP1, FGF1 and FGF2. Interacts with FGF1, FGF7, FGF10, FGF22 and HSPG2. Interacts with FGF2. Expressed in intestine, ovary, lung, placenta and normal and wounded skin.

It is found in the secreted. The protein resides in the extracellular space. The protein localises to the cell membrane. Functionally, acts as a carrier protein that releases fibroblast-binding factors (FGFs) from the extracellular matrix (EM) storage and thus enhances the mitogenic activity of FGFs. Enhances FGF2 signaling during tissue repair, angiogenesis and in tumor growth. The polypeptide is Fibroblast growth factor-binding protein 1 (Fgfbp1) (Mus musculus (Mouse)).